Reading from the N-terminus, the 254-residue chain is 3-deoxy-manno-octulosonate cytidylyltransferase (254 aa).

The protein belongs to the KdsB family.

It is found in the cytoplasm. The catalysed reaction is 3-deoxy-alpha-D-manno-oct-2-ulosonate + CTP = CMP-3-deoxy-beta-D-manno-octulosonate + diphosphate. It functions in the pathway nucleotide-sugar biosynthesis; CMP-3-deoxy-D-manno-octulosonate biosynthesis; CMP-3-deoxy-D-manno-octulosonate from 3-deoxy-D-manno-octulosonate and CTP: step 1/1. The protein operates within bacterial outer membrane biogenesis; lipopolysaccharide biosynthesis. Activates KDO (a required 8-carbon sugar) for incorporation into bacterial lipopolysaccharide in Gram-negative bacteria. This Tolumonas auensis (strain DSM 9187 / NBRC 110442 / TA 4) protein is 3-deoxy-manno-octulosonate cytidylyltransferase.